A 248-amino-acid polypeptide reads, in one-letter code: Cyclo(L-leucyl-L-leucyl) synthase (248 aa).

Ser37 acts as the Nucleophile in catalysis. Substrate is bound by residues Asn40, 180–184, Tyr204, and 209–210; these read YVIAE and KL.

This sequence belongs to the CDPS family. In terms of assembly, monomer.

It carries out the reaction 2 L-leucyl-tRNA(Leu) = cyclo(L-leucyl-L-leucyl) + 2 tRNA(Leu) + 2 H(+). In terms of biological role, involved in the biosynthesis of pulcherrimin, a red extracellular pigment. It uses activated amino acids in the form of aminoacyl-tRNAs (aa-tRNAs) as substrates to catalyze the ATP-independent formation of cyclodipeptides which are intermediates in diketopiperazine (DKP) biosynthetic pathways. Catalyzes the formation of cyclo(L-Leu-L-Leu) (cLL) from L-leucyl-tRNA(Leu). Can also incorporate various nonpolar residues, such as L-phenylalanine, L-leucine and methionine, into cyclodipeptides. This is Cyclo(L-leucyl-L-leucyl) synthase (yvmC) from Bacillus subtilis (strain 168).